The following is a 328-amino-acid chain: Formimidoylglutamase (328 aa).

Mn(2+) is bound by residues His133, Asp159, His161, Asp163, Asp253, and Asp255.

It belongs to the arginase family. Mn(2+) serves as cofactor.

It carries out the reaction N-formimidoyl-L-glutamate + H2O = formamide + L-glutamate. Its pathway is amino-acid degradation; L-histidine degradation into L-glutamate; L-glutamate from N-formimidoyl-L-glutamate (hydrolase route): step 1/1. In terms of biological role, catalyzes the conversion of N-formimidoyl-L-glutamate to L-glutamate and formamide. This is Formimidoylglutamase from Streptococcus pyogenes serotype M18 (strain MGAS8232).